Here is a 115-residue protein sequence, read N- to C-terminus: Sericin-1 (115 aa).

Residues glycine 1 to asparagine 115 are disordered.

Produced exclusively in the middle (MSG) section of silk glands.

Its subcellular location is the secreted. Its function is as follows. Provides the silk fibroin thread with a sticky coating. Acts as a cement by sticking silk threads together. This is Sericin-1 (SER1) from Galleria mellonella (Greater wax moth).